A 48-amino-acid polypeptide reads, in one-letter code: ATP synthase protein 8 (48 aa).

Met1 carries the N-formylmethionine modification. Topologically, residues 1–12 (MPQLIPFFFLNQ) are mitochondrial intermembrane. The helical transmembrane segment at 13–33 (LFYGYLALFALLVLVSWVILP) threads the bilayer. At 34-48 (YLLQLQIVRLLITKL) the chain is on the mitochondrial matrix side.

As to quaternary structure, F-type ATP synthases have 2 components, the catalytic core F(1) and the membrane-embedded component F(0), linked together by a central stalk and a peripheral stalk. The central stalk, also called rotor shaft, is often seen as part of F(1). The peripheral stalk is seen as part of F(0). F(0) contains the membrane channel next to the rotor. F-type ATP synthases form dimers but each monomer functions independently in ATP generation. The dimer consists of 18 different polypeptides: ATP1 (subunit alpha, part of F(1), 3 molecules per monomer), ATP2 (subunit beta, part of F(1), 3 molecules per monomer), ATP3 (subunit gamma, part of the central stalk), ATP4 (subunit b, part of the peripheral stalk), ATP5/OSCP (subunit 5/OSCP, part of the peripheral stalk), ATP6 (subunit a, part of the peripheral stalk), ATP7 (subunit d, part of the peripheral stalk), ATP8 (subunit 8, part of the peripheral stalk), OLI1 (subunit c, part of the rotor, 10 molecules per monomer), ATP14 (subunit h, part of the peripheral stalk), ATP15 (subunit epsilon, part of the central stalk), ATP16 (subunit delta, part of the central stalk), ATP17 (subunit f, part of the peripheral stalk), ATP18 (subunit i/j, part of the peripheral stalk). Dimer-specific subunits are ATP19 (subunit k, at interface between monomers), ATP20 (subunit g, at interface between monomers), TIM11 (subunit e, at interface between monomers). Also contains subunit L.

The protein localises to the mitochondrion inner membrane. Its function is as follows. Mitochondrial membrane ATP synthase (F(1)F(0) ATP synthase or Complex V) produces ATP from ADP in the presence of a proton gradient across the membrane which is generated by electron transport complexes of the respiratory chain. F-type ATP synthases consist of two structural domains, F(1) - containing the extramembraneous catalytic core, and F(0) - containing the membrane proton channel, linked together by a central stalk and a peripheral stalk. During catalysis, ATP synthesis in the catalytic domain of F(1) is coupled via a rotary mechanism of the central stalk subunits to proton translocation. Part of the complex F(0) domain. Minor subunit located with subunit a/ATP6 in the membrane. The chain is ATP synthase protein 8 from Pichia angusta (Yeast).